Here is a 948-residue protein sequence, read N- to C-terminus: UvrABC system protein A (948 aa).

31–38 (GLSGSGKS) provides a ligand contact to ATP. The segment at 249–277 (CPNGHDIGFTELSPRMFSFNSPYGACETC) adopts a C4-type zinc-finger fold. ABC transporter domains follow at residues 307 to 586 (WAGS…KNSL) and 606 to 934 (GNGS…QYLK). 638 to 645 (GVSGSGKS) is a binding site for ATP. Residues 737–763 (CETCEGDGILKIEMHFLPDVYVTCEVC) form a C4-type zinc finger.

Belongs to the ABC transporter superfamily. UvrA family. Forms a heterotetramer with UvrB during the search for lesions.

Its subcellular location is the cytoplasm. Its function is as follows. The UvrABC repair system catalyzes the recognition and processing of DNA lesions. UvrA is an ATPase and a DNA-binding protein. A damage recognition complex composed of 2 UvrA and 2 UvrB subunits scans DNA for abnormalities. When the presence of a lesion has been verified by UvrB, the UvrA molecules dissociate. The polypeptide is UvrABC system protein A (Leptospira interrogans serogroup Icterohaemorrhagiae serovar copenhageni (strain Fiocruz L1-130)).